Reading from the N-terminus, the 1054-residue chain is DNA-directed RNA polymerase subunit beta' (1054 aa).

Residues aspartate 383, aspartate 385, and aspartate 387 each contribute to the Mg(2+) site. Positions 752, 826, 833, and 836 each coordinate Zn(2+).

The protein belongs to the RNA polymerase beta' chain family. As to quaternary structure, the RNAP catalytic core consists of 2 alpha, 1 beta, 1 beta' and 1 omega subunit. When a sigma factor is associated with the core the holoenzyme is formed, which can initiate transcription. Requires Mg(2+) as cofactor. It depends on Zn(2+) as a cofactor.

The catalysed reaction is RNA(n) + a ribonucleoside 5'-triphosphate = RNA(n+1) + diphosphate. Functionally, DNA-dependent RNA polymerase catalyzes the transcription of DNA into RNA using the four ribonucleoside triphosphates as substrates. The polypeptide is DNA-directed RNA polymerase subunit beta' (Weissella paramesenteroides (Leuconostoc paramesenteroides)).